A 318-amino-acid polypeptide reads, in one-letter code: Peroxisomal and mitochondrial division factor 1 (318 aa).

The segment at 1-39 (MADVEDRAAKGISDYDQGGVKTTELERKIEDMENKNQEL) is disordered. Topologically, residues 1 to 291 (MADVEDRAAK…QKGSLEAEYQ (291 aa)) are cytoplasmic. Residues 19–260 (GVKTTELERK…KKVEEGNKTV (242 aa)) adopt a coiled-coil conformation. Over residues 23–39 (TELERKIEDMENKNQEL) the composition is skewed to basic and acidic residues. Residues 292 to 312 (WPVVAAGSVGAAGLVAATFFV) traverse the membrane as a helical segment. Over 313 to 318 (CYSKLR) the chain is Mitochondrial intermembrane.

Homodimer. Interacts with PMD2.

The protein localises to the peroxisome membrane. It localises to the mitochondrion outer membrane. In terms of biological role, involved in morphogenesis and proliferation of peroxisomes and mitochondria, independently from the previously defined pathway controlled by the FIS1-DRP3 complex. This Arabidopsis thaliana (Mouse-ear cress) protein is Peroxisomal and mitochondrial division factor 1.